The chain runs to 343 residues: S-adenosylmethionine:tRNA ribosyltransferase-isomerase (343 aa).

The protein belongs to the QueA family. Monomer.

The protein resides in the cytoplasm. It catalyses the reaction 7-aminomethyl-7-carbaguanosine(34) in tRNA + S-adenosyl-L-methionine = epoxyqueuosine(34) in tRNA + adenine + L-methionine + 2 H(+). Its pathway is tRNA modification; tRNA-queuosine biosynthesis. Transfers and isomerizes the ribose moiety from AdoMet to the 7-aminomethyl group of 7-deazaguanine (preQ1-tRNA) to give epoxyqueuosine (oQ-tRNA). This chain is S-adenosylmethionine:tRNA ribosyltransferase-isomerase, found in Pelobacter propionicus (strain DSM 2379 / NBRC 103807 / OttBd1).